Here is a 502-residue protein sequence, read N- to C-terminus: Sodium/proline symporter (502 aa).

The Periplasmic portion of the chain corresponds to 1 to 5; the sequence is MAIST. The chain crosses the membrane as a helical span at residues 6–26; sequence PMLVTFCVYIFGMILIGFIAW. Over 27–41 the chain is Cytoplasmic; sequence RSTKNFDDYILGGRS. 2 hydrophilic regions span residues 27 to 66 and 88 to 124; these read RSTK…GLPG and INWK…KSRI. Residues 42-62 form a helical membrane-spanning segment; it reads LGPFVTALSAGASDMSGWLLM. At 63 to 67 the chain is on the periplasmic side; that stretch reads GLPGA. The helical transmembrane segment at 68-88 threads the bilayer; it reads VFLSGISESWIAIGLTLGAWI. Residues 89–126 are Cytoplasmic-facing; that stretch reads NWKLVAGRLRVHTEYNNNALTLPDYFTGRFEDKSRILR. A helical transmembrane segment spans residues 127 to 147; that stretch reads IISALVILLFFTIYCASGIVA. The Periplasmic segment spans residues 148–162; that stretch reads GARLFESTFGMSYET. The segment at 151–162 is hydrophilic; the sequence is LFESTFGMSYET. Residues 163 to 183 form a helical membrane-spanning segment; the sequence is ALWAGAAATILYTFIGGFLAV. At 184 to 192 the chain is on the cytoplasmic side; it reads SWTDTVQAS. The hydrophilic stretch occupies residues 185 to 189; the sequence is WTDTV. The chain crosses the membrane as a helical span at residues 193 to 213; the sequence is LMIFALILTPVIVIISVGGFG. Hydrophilic stretches follow at residues 214-231, 249-274, and 296-319; these read DSLE…DMLK, FGQP…RRIS, and FNDH…ELAQ. Over 214 to 234 the chain is Periplasmic; that stretch reads DSLEVIKQKSIENVDMLKGLN. The chain crosses the membrane as a helical span at residues 235–255; that stretch reads FVAIISLMGWGLGYFGQPHIL. Residues 256–275 are Cytoplasmic-facing; the sequence is ARFMAADSHHSIVHARRISM. The helical transmembrane segment at 276–296 threads the bilayer; the sequence is TWMILCLAGAVAVGFFGIAYF. Topologically, residues 297 to 319 are periplasmic; the sequence is NDHPALAGAVNQNAERVFIELAQ. A helical membrane pass occupies residues 320–340; the sequence is ILFNPWIAGILLSAILAAVMS. The Cytoplasmic segment spans residues 341 to 370; sequence TLSCQLLVCSSAITEDLYKAFLRKHASQKE. The interval 341-370 is hydrophilic; that stretch reads TLSCQLLVCSSAITEDLYKAFLRKHASQKE. The chain crosses the membrane as a helical span at residues 371–391; that stretch reads LVWVGRVMVLVVALVAIALAA. The Periplasmic segment spans residues 392 to 397; it reads NPENRV. Residues 392 to 397 are hydrophilic; it reads NPENRV. Residues 398 to 418 traverse the membrane as a helical segment; that stretch reads LGLVSYAWAGFGAAFGPVVLF. Topologically, residues 419–427 are cytoplasmic; that stretch reads SVMWSRMTR. 2 hydrophilic regions span residues 424–430 and 446–448; these read RMTRNGA and QFG. Helical transmembrane passes span 428–448 and 449–469; these read NGAL…KQFG and WLGL…IVVF. Residues 470–502 lie on the Cytoplasmic side of the membrane; it reads SLLGKAPSAAMQKRFAEADAHYHSAPPSRLQES. The interval 476-502 is hydrophilic; that stretch reads PSAAMQKRFAEADAHYHSAPPSRLQES.

It belongs to the sodium:solute symporter (SSF) (TC 2.A.21) family. Has been isolated from inner membrane preparations as a homodimer.

It is found in the cell inner membrane. The enzyme catalyses L-proline(in) + Na(+)(in) = L-proline(out) + Na(+)(out). Its activity is regulated as follows. Activity is stimulated by phosphatidylethanolamine and phosphatidylglycerol, but not by phosphatidylcholine and cardiolipin. Proline uptake is inhibited by the sulfhydryl reagent N-ethylmaleimide (NEM). Proline, in the presence of Na(+) or Li(+), protects the carrier functions from NEM-inactivation. Functionally, catalyzes the sodium-dependent uptake of extracellular L-proline. This protein is also capable of using lithium as the transport cation. Also catalyzes the uptake of propionate. In Escherichia coli (strain K12), this protein is Sodium/proline symporter (putP).